Consider the following 358-residue polypeptide: WAT1-related protein At3g28080 (358 aa).

10 helical membrane-spanning segments follow: residues 12-32 (AVFL…STLF), 42-62 (IYPF…PSLF), 81-101 (IGLL…GIEY), 105-125 (TLAS…AVIF), 137-157 (SVAK…VIFY), 187-207 (WLIG…SFIL), 219-239 (FTVS…IGLV), 245-265 (PSIW…TGII), 283-303 (LYLA…GTIF), and 308-328 (LYLG…VVMW). An EamA domain is found at 27-155 (GLSTLFKVAT…LSLIGAFVVI (129 aa)).

This sequence belongs to the drug/metabolite transporter (DMT) superfamily. Plant drug/metabolite exporter (P-DME) (TC 2.A.7.4) family.

Its subcellular location is the membrane. The chain is WAT1-related protein At3g28080 from Arabidopsis thaliana (Mouse-ear cress).